The following is a 250-amino-acid chain: Ribonuclease PH (250 aa).

Phosphate contacts are provided by residues Arg-87 and 125-127 (GTR).

Belongs to the RNase PH family. Homohexameric ring arranged as a trimer of dimers.

It carries out the reaction tRNA(n+1) + phosphate = tRNA(n) + a ribonucleoside 5'-diphosphate. Its function is as follows. Phosphorolytic 3'-5' exoribonuclease that plays an important role in tRNA 3'-end maturation. Removes nucleotide residues following the 3'-CCA terminus of tRNAs; can also add nucleotides to the ends of RNA molecules by using nucleoside diphosphates as substrates, but this may not be physiologically important. Probably plays a role in initiation of 16S rRNA degradation (leading to ribosome degradation) during starvation. The polypeptide is Ribonuclease PH (Moorella thermoacetica (strain ATCC 39073 / JCM 9320)).